The primary structure comprises 174 residues: RNA pyrophosphohydrolase (174 aa).

A Nudix hydrolase domain is found at 6-149 (GYRPNVGIIL…KRDVYLGALK (144 aa)). The short motif at 38–59 (GGIKPGESPETAMYRELYEEVG) is the Nudix box element.

This sequence belongs to the Nudix hydrolase family. RppH subfamily. The cofactor is a divalent metal cation.

Accelerates the degradation of transcripts by removing pyrophosphate from the 5'-end of triphosphorylated RNA, leading to a more labile monophosphorylated state that can stimulate subsequent ribonuclease cleavage. The sequence is that of RNA pyrophosphohydrolase from Neisseria meningitidis serogroup C / serotype 2a (strain ATCC 700532 / DSM 15464 / FAM18).